Here is a 187-residue protein sequence, read N- to C-terminus: Elongation factor P 2 (187 aa).

It belongs to the elongation factor P family.

Its subcellular location is the cytoplasm. It functions in the pathway protein biosynthesis; polypeptide chain elongation. Functionally, involved in peptide bond synthesis. Stimulates efficient translation and peptide-bond synthesis on native or reconstituted 70S ribosomes in vitro. Probably functions indirectly by altering the affinity of the ribosome for aminoacyl-tRNA, thus increasing their reactivity as acceptors for peptidyl transferase. This Geobacter sulfurreducens (strain ATCC 51573 / DSM 12127 / PCA) protein is Elongation factor P 2.